The chain runs to 296 residues: Outer surface protein B (296 aa).

An N-terminal signal peptide occupies residues 1 to 15 (MRLLIGFALALALIG). The N-palmitoyl cysteine moiety is linked to residue Cys-16. Residue Cys-16 is the site of S-diacylglycerol cysteine attachment. The disordered stretch occupies residues 25-51 (GSQKENDLNLEDSSKKSHQNAKQDLPA). The span at 28–39 (KENDLNLEDSSK) shows a compositional bias: basic and acidic residues.

The protein resides in the cell outer membrane. This chain is Outer surface protein B (ospB), found in Borreliella burgdorferi (strain ATCC 35210 / DSM 4680 / CIP 102532 / B31) (Borrelia burgdorferi).